We begin with the raw amino-acid sequence, 140 residues long: Profilin (140 aa).

Belongs to the profilin family. As to quaternary structure, occurs in many kinds of cells as a complex with monomeric actin in a 1:1 ratio.

Binds to actin and affects the structure of the cytoskeleton. At high concentrations, profilin prevents the polymerization of actin, whereas it enhances it at low concentrations. By binding to PIP2, it inhibits the formation of IP3 and DG. The sequence is that of Profilin from Suberites domuncula (Sponge).